A 202-amino-acid chain; its full sequence is Na(+)-translocating NADH-quinone reductase subunit E (202 aa).

The next 6 membrane-spanning stretches (helical) occupy residues 11–31 (SIFMENMALAFFLGMCTFLAV), 41–61 (LGVAVIVVLGISVPVNQIIYF), 81–101 (FLGFITFIGVIAALVQILEMV), 114–134 (GIYLPLITVNCAILGGVLFMV), 144–164 (LVYGVGSGVGWMLAIVLLAGI), and 180–200 (LGITFTTAGLMAIAFMSFSGI).

Belongs to the NqrDE/RnfAE family. Composed of six subunits; NqrA, NqrB, NqrC, NqrD, NqrE and NqrF.

It is found in the cell inner membrane. It carries out the reaction a ubiquinone + n Na(+)(in) + NADH + H(+) = a ubiquinol + n Na(+)(out) + NAD(+). Functionally, NQR complex catalyzes the reduction of ubiquinone-1 to ubiquinol by two successive reactions, coupled with the transport of Na(+) ions from the cytoplasm to the periplasm. NqrA to NqrE are probably involved in the second step, the conversion of ubisemiquinone to ubiquinol. The polypeptide is Na(+)-translocating NADH-quinone reductase subunit E (Psychromonas ingrahamii (strain DSM 17664 / CCUG 51855 / 37)).